Here is a 130-residue protein sequence, read N- to C-terminus: uncharacterized protein (130 aa).

An N-acetylmethionine modification is found at Met-1.

As to quaternary structure, homotetramer.

This is an uncharacterized protein from Arabidopsis thaliana (Mouse-ear cress).